A 216-amino-acid chain; its full sequence is Sperm microtubule inner protein 8 (216 aa).

As to quaternary structure, microtubule inner protein component of sperm flagellar doublet microtubules.

The protein resides in the cytoplasm. It is found in the cytoskeleton. Its subcellular location is the flagellum axoneme. Microtubule inner protein (MIP) part of the dynein-decorated doublet microtubules (DMTs) in flagellum axoneme. May serve to reinforce and thus stabilize the microtubule structure in the sperm flagella. The polypeptide is Sperm microtubule inner protein 8 (Spmip8) (Rattus norvegicus (Rat)).